Reading from the N-terminus, the 197-residue chain is Translation machinery-associated protein 22 (197 aa).

Positions 103–174 constitute an SUI1 domain; it reads IRIKRVERNK…DVREFLIKNY (72 aa).

It belongs to the DENR family. In terms of assembly, interacts with the 40S ribosomal subunit.

It is found in the cytoplasm. This is Translation machinery-associated protein 22 (tma22) from Botryotinia fuckeliana (strain B05.10) (Noble rot fungus).